The chain runs to 549 residues: MDKNNNNNLRLILAIALSFLFIALYSYFFQEPNKTTTETTKQETTNNHTATSPTASNTITQDFSVTQTIPQESLLSTISFEHAKIEIDSLGRIKQVYLKDKKYLTPKEKGFLEHVSHLFSSKENSQPSLKELPLLAADKLKPLEVRFLDPTLNNKAFNTPYSASKTTLGPNEQLVLTQDLGTLSIIKTLTFYDDLHYDLKIAFKSPNNLIPSYVITNGYRPVADLDSYTFSGVLLENTDKKIEKIEDKDAKEIKRFSNTLFLSSVDRYFTTLLFTKDPQGFEALIDSEIGTKNPLGFISLKNEANLHGYIGPKDYRSLKAISPMLTDVIEYGLITFFAKGVFVLLDYLYQFVGNWGWAIILLTIIVRIILYPLSYKGMVSMQKLKELAPKMKELQEKYKGEPQKLQAHMMQLYKKHGANPLGGCLPLILQIPVFFAIYRVLYNAVELKSSEWVLWIHDLSIMDPYFILPLLMGASMYWHQSVTPNTMTDPMQAKIFKLLPLLFTIFLITFPAGLVLYWTTHNILSVLQQLIINKVLENKKRAHAQNIKE.

A helical transmembrane segment spans residues 9-29 (LRLILAIALSFLFIALYSYFF). Residues 37 to 51 (TETTKQETTNNHTAT) are compositionally biased toward low complexity. The tract at residues 37–56 (TETTKQETTNNHTATSPTAS) is disordered. The next 5 membrane-spanning stretches (helical) occupy residues 328–348 (VIEY…LDYL), 351–371 (FVGN…IILY), 417–437 (GANP…FFAI), 452–472 (WVLW…PLLM), and 498–518 (LLPL…VLYW).

Belongs to the OXA1/ALB3/YidC family. Type 1 subfamily. As to quaternary structure, interacts with the Sec translocase complex via SecD. Specifically interacts with transmembrane segments of nascent integral membrane proteins during membrane integration.

It localises to the cell inner membrane. Functionally, required for the insertion and/or proper folding and/or complex formation of integral membrane proteins into the membrane. Involved in integration of membrane proteins that insert both dependently and independently of the Sec translocase complex, as well as at least some lipoproteins. Aids folding of multispanning membrane proteins. The protein is Membrane protein insertase YidC of Helicobacter pylori (strain J99 / ATCC 700824) (Campylobacter pylori J99).